The sequence spans 528 residues: GMP synthase [glutamine-hydrolyzing] (528 aa).

In terms of domain architecture, Glutamine amidotransferase type-1 spans 13–203 (TVLVVDFGAQ…LYEAAGCRPT (191 aa)). The Nucleophile role is filled by Cys-90. Residues His-177 and Glu-179 contribute to the active site. The GMPS ATP-PPase domain maps to 204 to 402 (WTMVNIVEDQ…LGLPAEMVWR (199 aa)). Residue 231 to 237 (SGGVDSA) participates in ATP binding.

In terms of assembly, homodimer.

The enzyme catalyses XMP + L-glutamine + ATP + H2O = GMP + L-glutamate + AMP + diphosphate + 2 H(+). The protein operates within purine metabolism; GMP biosynthesis; GMP from XMP (L-Gln route): step 1/1. Catalyzes the synthesis of GMP from XMP. In Thermobifida fusca (strain YX), this protein is GMP synthase [glutamine-hydrolyzing].